A 422-amino-acid polypeptide reads, in one-letter code: Isocitrate dehydrogenase [NADP] (422 aa).

An NADP(+)-binding site is contributed by T94. 5 residues coordinate D-threo-isocitrate: S103, N105, R109, R119, and R143. Residue D310 participates in Mg(2+) binding. Residues 344–350 (HGTAPKY), N357, Y396, and R400 each bind NADP(+).

The protein belongs to the isocitrate and isopropylmalate dehydrogenases family. As to quaternary structure, homodimer. It depends on Mg(2+) as a cofactor. Mn(2+) is required as a cofactor.

It carries out the reaction D-threo-isocitrate + NADP(+) = 2-oxoglutarate + CO2 + NADPH. Functionally, catalyzes the oxidative decarboxylation of isocitrate to 2-oxoglutarate and carbon dioxide with the concomitant reduction of NADP(+). This Staphylococcus aureus (strain COL) protein is Isocitrate dehydrogenase [NADP] (icd).